The following is a 193-amino-acid chain: NADH-quinone oxidoreductase subunit B (193 aa).

[4Fe-4S] cluster contacts are provided by Cys-72, Cys-73, Cys-137, and Cys-167.

It belongs to the complex I 20 kDa subunit family. As to quaternary structure, NDH-1 is composed of 14 different subunits. Subunits NuoB, C, D, E, F, and G constitute the peripheral sector of the complex. It depends on [4Fe-4S] cluster as a cofactor.

The protein localises to the cell inner membrane. It carries out the reaction a quinone + NADH + 5 H(+)(in) = a quinol + NAD(+) + 4 H(+)(out). Functionally, NDH-1 shuttles electrons from NADH, via FMN and iron-sulfur (Fe-S) centers, to quinones in the respiratory chain. The immediate electron acceptor for the enzyme in this species is believed to be ubiquinone. Couples the redox reaction to proton translocation (for every two electrons transferred, four hydrogen ions are translocated across the cytoplasmic membrane), and thus conserves the redox energy in a proton gradient. The polypeptide is NADH-quinone oxidoreductase subunit B (Phenylobacterium zucineum (strain HLK1)).